The chain runs to 229 residues: Potassium/proton antiporter CemA (229 aa).

3 helical membrane passes run 7–27, 106–126, and 189–209; these read LTPL…SLSF, IILH…FFIM, and IISG…KYWI.

This sequence belongs to the CemA family.

It is found in the plastid. It localises to the chloroplast inner membrane. It carries out the reaction K(+)(in) + H(+)(out) = K(+)(out) + H(+)(in). Contributes to K(+)/H(+) antiport activity by supporting proton efflux to control proton extrusion and homeostasis in chloroplasts in a light-dependent manner to modulate photosynthesis. Prevents excessive induction of non-photochemical quenching (NPQ) under continuous-light conditions. Indirectly promotes efficient inorganic carbon uptake into chloroplasts. The polypeptide is Potassium/proton antiporter CemA (Ceratophyllum demersum (Rigid hornwort)).